The chain runs to 215 residues: Imidazole glycerol phosphate synthase subunit HisH (215 aa).

Residues 3 to 215 (TAVVFDYGFG…QLLKNWIATL (213 aa)) enclose the Glutamine amidotransferase type-1 domain. Catalysis depends on C81, which acts as the Nucleophile. Active-site residues include H196 and E198.

As to quaternary structure, heterodimer of HisH and HisF.

The protein resides in the cytoplasm. It catalyses the reaction 5-[(5-phospho-1-deoxy-D-ribulos-1-ylimino)methylamino]-1-(5-phospho-beta-D-ribosyl)imidazole-4-carboxamide + L-glutamine = D-erythro-1-(imidazol-4-yl)glycerol 3-phosphate + 5-amino-1-(5-phospho-beta-D-ribosyl)imidazole-4-carboxamide + L-glutamate + H(+). The enzyme catalyses L-glutamine + H2O = L-glutamate + NH4(+). The protein operates within amino-acid biosynthesis; L-histidine biosynthesis; L-histidine from 5-phospho-alpha-D-ribose 1-diphosphate: step 5/9. In terms of biological role, IGPS catalyzes the conversion of PRFAR and glutamine to IGP, AICAR and glutamate. The HisH subunit catalyzes the hydrolysis of glutamine to glutamate and ammonia as part of the synthesis of IGP and AICAR. The resulting ammonia molecule is channeled to the active site of HisF. The protein is Imidazole glycerol phosphate synthase subunit HisH of Bifidobacterium longum (strain NCC 2705).